Here is a 215-residue protein sequence, read N- to C-terminus: V-type ATP synthase subunit D (215 aa).

It belongs to the V-ATPase D subunit family.

Functionally, produces ATP from ADP in the presence of a proton gradient across the membrane. The sequence is that of V-type ATP synthase subunit D from Anaeromyxobacter sp. (strain Fw109-5).